Consider the following 306-residue polypeptide: tRNA dimethylallyltransferase (306 aa).

Residue 11 to 18 (APTAAGKT) participates in ATP binding. 13–18 (TAAGKT) provides a ligand contact to substrate.

This sequence belongs to the IPP transferase family. Monomer. Requires Mg(2+) as cofactor.

It catalyses the reaction adenosine(37) in tRNA + dimethylallyl diphosphate = N(6)-dimethylallyladenosine(37) in tRNA + diphosphate. Catalyzes the transfer of a dimethylallyl group onto the adenine at position 37 in tRNAs that read codons beginning with uridine, leading to the formation of N6-(dimethylallyl)adenosine (i(6)A). This chain is tRNA dimethylallyltransferase, found in Deinococcus radiodurans (strain ATCC 13939 / DSM 20539 / JCM 16871 / CCUG 27074 / LMG 4051 / NBRC 15346 / NCIMB 9279 / VKM B-1422 / R1).